Here is a 249-residue protein sequence, read N- to C-terminus: Phosphomannomutase 2 (249 aa).

The active-site Nucleophile is Asp-12. Asp-12 and Asp-14 together coordinate Mg(2+). The Proton donor/acceptor role is filled by Asp-14. Alpha-D-mannose 1-phosphate-binding residues include Arg-21, Arg-123, Arg-134, Arg-141, Ser-179, and Asp-181. Asp-209 lines the Mg(2+) pocket.

The protein belongs to the eukaryotic PMM family. As to quaternary structure, homodimer.

It is found in the cytoplasm. It carries out the reaction alpha-D-mannose 1-phosphate = D-mannose 6-phosphate. Its pathway is nucleotide-sugar biosynthesis; GDP-alpha-D-mannose biosynthesis; alpha-D-mannose 1-phosphate from D-fructose 6-phosphate: step 2/2. Involved in the synthesis of the GDP-mannose and dolichol-phosphate-mannose required for a number of critical mannosyl transfer reactions. This is Phosphomannomutase 2 (pmmB) from Dictyostelium discoideum (Social amoeba).